The following is a 139-amino-acid chain: Putative nickel-responsive regulator (139 aa).

Residues His79, His90, His92, and Cys98 each contribute to the Ni(2+) site.

Belongs to the transcriptional regulatory CopG/NikR family. Requires Ni(2+) as cofactor.

Its function is as follows. Transcriptional regulator. The protein is Putative nickel-responsive regulator of Anaeromyxobacter dehalogenans (strain 2CP-1 / ATCC BAA-258).